The following is a 277-amino-acid chain: 4-diphosphocytidyl-2-C-methyl-D-erythritol kinase (277 aa).

Lys-9 is a catalytic residue. 91–101 (PMGAGLGGGSS) provides a ligand contact to ATP. Residue Asp-133 is part of the active site.

Belongs to the GHMP kinase family. IspE subfamily.

The enzyme catalyses 4-CDP-2-C-methyl-D-erythritol + ATP = 4-CDP-2-C-methyl-D-erythritol 2-phosphate + ADP + H(+). Its pathway is isoprenoid biosynthesis; isopentenyl diphosphate biosynthesis via DXP pathway; isopentenyl diphosphate from 1-deoxy-D-xylulose 5-phosphate: step 3/6. Functionally, catalyzes the phosphorylation of the position 2 hydroxy group of 4-diphosphocytidyl-2C-methyl-D-erythritol. This Acinetobacter baumannii (strain AB307-0294) protein is 4-diphosphocytidyl-2-C-methyl-D-erythritol kinase.